Here is an 81-residue protein sequence, read N- to C-terminus: Toxin TdNa10 (81 aa).

The first 20 residues, 1–20 (MWTFAIVLAFLLIGLDEGEA), serve as a signal peptide directing secretion. The 61-residue stretch at 21–81 (LDGYPLSKNN…KMYPGELPCH (61 aa)) folds into the LCN-type CS-alpha/beta domain. Cystine bridges form between Cys-32-Cys-80, Cys-36-Cys-57, Cys-42-Cys-62, and Cys-46-Cys-64.

Belongs to the long (4 C-C) scorpion toxin superfamily. Sodium channel inhibitor family. Beta subfamily. As to expression, expressed by the venom gland.

It localises to the secreted. Alpha toxins bind voltage-independently at site-3 of sodium channels (Nav) and inhibit the inactivation of the activated channels, thereby blocking neuronal transmission. This toxin binds, in vitro, to sodium channels and inhibits the inactivation of the activated channels. Seems not toxic to mice, crickets and sweet-water shrimps. In Tityus discrepans (Venezuelan scorpion), this protein is Toxin TdNa10.